Here is a 907-residue protein sequence, read N- to C-terminus: Probable dipeptidyl-aminopeptidase B (907 aa).

A compositionally biased stretch (basic and acidic residues) spans 1–26 (MPRQRAPKEEEAELLTKQERSTRSSE). The interval 1–70 (MPRQRAPKEE…EKYTDEDDEA (70 aa)) is disordered. Residues 1–93 (MPRQRAPKEE…PVAVDKKTRR (93 aa)) lie on the Cytoplasmic side of the membrane. A compositionally biased stretch (low complexity) spans 30–44 (DASVSSISTTSLVLE). A helical; Signal-anchor for type II membrane protein transmembrane segment spans residues 94 to 114 (WLWIVGIACVTGWALALVFFL). Topologically, residues 115–907 (MSGSYKHVST…SQVDARLERR (793 aa)) are vacuolar. The N-linked (GlcNAc...) asparagine glycan is linked to N560. Catalysis depends on S751, which acts as the Charge relay system. N805 carries an N-linked (GlcNAc...) asparagine glycan. Residues D828 and H861 each act as charge relay system in the active site.

The protein belongs to the peptidase S9B family.

It is found in the vacuole membrane. It carries out the reaction Release of an N-terminal dipeptide, Xaa-Yaa-|-Zaa-, from a polypeptide, preferentially when Yaa is Pro, provided Zaa is neither Pro nor hydroxyproline.. Its function is as follows. Type IV dipeptidyl-peptidase which removes N-terminal dipeptides sequentially from polypeptides having unsubstituted N-termini provided that the penultimate residue is proline. The sequence is that of Probable dipeptidyl-aminopeptidase B (dapB) from Pyrenophora teres f. teres (strain 0-1) (Barley net blotch fungus).